The chain runs to 141 residues: Hemoglobin subunit alpha (141 aa).

Positions 1-141 constitute a Globin domain; sequence VLSPADKTNV…VSTVLTSKYR (141 aa). Ser-3 bears the Phosphoserine mark. N6-succinyllysine is present on Lys-7. Residue Thr-8 is modified to Phosphothreonine. Lys-11 carries the post-translational modification N6-succinyllysine. At Lys-16 the chain carries N6-acetyllysine; alternate. Lys-16 is subject to N6-succinyllysine; alternate. Tyr-24 carries the post-translational modification Phosphotyrosine. Ser-35 is modified (phosphoserine). Lys-40 carries the post-translational modification N6-succinyllysine. Ser-49 carries the post-translational modification Phosphoserine. His-58 is a binding site for O2. His-87 serves as a coordination point for heme b. Ser-102 is modified (phosphoserine). Thr-108 carries the post-translational modification Phosphothreonine. A Phosphoserine modification is found at Ser-124. Phosphothreonine is present on residues Thr-134 and Thr-137. Position 138 is a phosphoserine (Ser-138).

Belongs to the globin family. In terms of assembly, heterotetramer of two alpha chains and two beta chains. As to expression, red blood cells.

In terms of biological role, involved in oxygen transport from the lung to the various peripheral tissues. Functionally, hemopressin acts as an antagonist peptide of the cannabinoid receptor CNR1. Hemopressin-binding efficiently blocks cannabinoid receptor CNR1 and subsequent signaling. The chain is Hemoglobin subunit alpha (HBA) from Odobenus rosmarus divergens (Pacific walrus).